Consider the following 337-residue polypeptide: N-acetyl-gamma-glutamyl-phosphate reductase (337 aa).

Residue C145 is part of the active site.

The protein belongs to the NAGSA dehydrogenase family. Type 1 subfamily.

It is found in the cytoplasm. It carries out the reaction N-acetyl-L-glutamate 5-semialdehyde + phosphate + NADP(+) = N-acetyl-L-glutamyl 5-phosphate + NADPH + H(+). It participates in amino-acid biosynthesis; L-arginine biosynthesis; N(2)-acetyl-L-ornithine from L-glutamate: step 3/4. Catalyzes the NADPH-dependent reduction of N-acetyl-5-glutamyl phosphate to yield N-acetyl-L-glutamate 5-semialdehyde. This chain is N-acetyl-gamma-glutamyl-phosphate reductase, found in Methanosarcina barkeri (strain Fusaro / DSM 804).